Reading from the N-terminus, the 274-residue chain is Leucine-rich repeat-containing protein 10 (274 aa).

LRR repeat units lie at residues 30–51, 52–74, 76–97, 98–120, 121–143, 145–166, 167–189, and 191–213; these read LDRMVDLSGSQLRRFPLHVCSF, TELVKLYLSDNHLHSLPPDLAQL, NLQILALDFNNFKALPRVVCTL, KQLCILYLGNNKLCDLPDELSLL, QNLRTLWLESNCLTRLPDVVCEL, LLKTLHAGSNALRLLPGQLRRL, RELRTIWLSGNQLADFPSVLLRM, and FLEVIDVDRNSIRYFPSLAHLTN. The interval 236-274 is disordered; the sequence is RVGRWAEETPEPDPRKARRYALAKEENQEPPPPLLPSSS. Residues 239–250 are compositionally biased toward basic and acidic residues; sequence RWAEETPEPDPR. The span at 264-274 shows a compositional bias: pro residues; it reads EPPPPLLPSSS.

Detected specifically in the heart.

It is found in the nucleus. Functionally, may play important roles in cardiac development and/or cardiac function. The protein is Leucine-rich repeat-containing protein 10 (Lrrc10) of Mus musculus (Mouse).